The primary structure comprises 158 residues: Deoxyuridine 5'-triphosphate nucleotidohydrolase (158 aa).

Substrate is bound by residues Arg75 to Gly77, Asn88, Thr92 to Asp94, and Lys102.

The protein belongs to the dUTPase family. Requires Mg(2+) as cofactor.

It catalyses the reaction dUTP + H2O = dUMP + diphosphate + H(+). It functions in the pathway pyrimidine metabolism; dUMP biosynthesis; dUMP from dCTP (dUTP route): step 2/2. Its function is as follows. This enzyme is involved in nucleotide metabolism: it produces dUMP, the immediate precursor of thymidine nucleotides and it decreases the intracellular concentration of dUTP so that uracil cannot be incorporated into DNA. The chain is Deoxyuridine 5'-triphosphate nucleotidohydrolase from Bifidobacterium longum (strain DJO10A).